The primary structure comprises 693 residues: Oxysterol-binding protein-related protein 2B (693 aa).

The segment covering 1 to 15 (MPLTRSKSLPATENG) has biased composition (polar residues). Residues 1-22 (MPLTRSKSLPATENGGSDRETL) are disordered. A PH domain is found at 25–154 (GRSVAGILYK…WLQALASTRG (130 aa)). The stretch at 207 to 239 (EVQEQIKLLHEERKKLLDALRQLEMANLEAEAS) forms a coiled coil. Disordered regions lie at residues 256–298 (LGRG…GEPD) and 600–639 (EKLP…RMSR). Residues 274–284 (QEFEDISEEDE) show a composition bias toward acidic residues. 2 stretches are compositionally biased toward basic and acidic residues: residues 285 to 294 (ASFHDTKESF) and 600 to 635 (EKLP…ERRQ). Positions 612-643 (DQRHLENGEYEKANEEKQRLERRQRMSRQIQE) form a coiled coil.

Belongs to the OSBP family. As to expression, expressed in roots, leaves, stems and flowers.

In terms of biological role, may be involved in the transport of sterols. This is Oxysterol-binding protein-related protein 2B (ORP2B) from Arabidopsis thaliana (Mouse-ear cress).